The chain runs to 238 residues: Probable metal transport system ATP-binding protein TP_0035 (238 aa).

The ABC transporter domain maps to 10–231 (VLLQNVSFRY…LDMQKKDALA (222 aa)). Position 44-51 (44-51 (GENGSGKS)) interacts with ATP.

Belongs to the ABC transporter superfamily.

It is found in the cell inner membrane. In terms of biological role, part of an ATP-driven transport system TP_0034/TP_0035/TP_0036 for a metal. Probably responsible for energy coupling to the transport system. The polypeptide is Probable metal transport system ATP-binding protein TP_0035 (Treponema pallidum (strain Nichols)).